Consider the following 560-residue polypeptide: Chaperonin GroEL 2 (560 aa).

ATP is bound by residues Thr29–Pro32, Asp86–Thr90, Gly413, Asn478–Ala480, and Asp494.

It belongs to the chaperonin (HSP60) family. Forms a cylinder of 14 subunits composed of two heptameric rings stacked back-to-back. Interacts with the co-chaperonin GroES.

Its subcellular location is the cytoplasm. It catalyses the reaction ATP + H2O + a folded polypeptide = ADP + phosphate + an unfolded polypeptide.. Its function is as follows. Together with its co-chaperonin GroES, plays an essential role in assisting protein folding. The GroEL-GroES system forms a nano-cage that allows encapsulation of the non-native substrate proteins and provides a physical environment optimized to promote and accelerate protein folding. This Trichormus variabilis (strain ATCC 29413 / PCC 7937) (Anabaena variabilis) protein is Chaperonin GroEL 2.